Reading from the N-terminus, the 187-residue chain is MSKSASRARLADIIRARSFGRGEITLASGRKSDFYFNLKPTMLDPEGAALLAELTFEALREDNVDYIGGLEMGAVPLAGAIAQLSWLKNHPIAAFFVRKKPKEHGARLSVEGLSKTETLQGKRVVIVEDVTTTGGSAIKAAESVREAGGVIVLVLTMVDREEGATEAFAAAGLPFRSLYKASEFLKS.

5-phospho-alpha-D-ribose 1-diphosphate-binding positions include R98, K99, K102, H104, and E128–S136. Residues T132 and R160 each coordinate orotate.

This sequence belongs to the purine/pyrimidine phosphoribosyltransferase family. PyrE subfamily. As to quaternary structure, homodimer. Mg(2+) is required as a cofactor.

It carries out the reaction orotidine 5'-phosphate + diphosphate = orotate + 5-phospho-alpha-D-ribose 1-diphosphate. The protein operates within pyrimidine metabolism; UMP biosynthesis via de novo pathway; UMP from orotate: step 1/2. Functionally, catalyzes the transfer of a ribosyl phosphate group from 5-phosphoribose 1-diphosphate to orotate, leading to the formation of orotidine monophosphate (OMP). In Rhodopseudomonas palustris (strain BisB18), this protein is Orotate phosphoribosyltransferase.